The sequence spans 65 residues: Protein translocase subunit SecE (65 aa).

A helical membrane pass occupies residues Leu44–Ile64.

This sequence belongs to the SecE/SEC61-gamma family. In terms of assembly, component of the Sec protein translocase complex. Heterotrimer consisting of SecY (alpha), SecG (beta) and SecE (gamma) subunits. The heterotrimers can form oligomers, although 1 heterotrimer is thought to be able to translocate proteins. Interacts with the ribosome. May interact with SecDF, and other proteins may be involved.

Its subcellular location is the cell membrane. Functionally, essential subunit of the Sec protein translocation channel SecYEG. Clamps together the 2 halves of SecY. May contact the channel plug during translocation. The polypeptide is Protein translocase subunit SecE (Sulfolobus acidocaldarius (strain ATCC 33909 / DSM 639 / JCM 8929 / NBRC 15157 / NCIMB 11770)).